We begin with the raw amino-acid sequence, 534 residues long: Pentatricopeptide repeat-containing protein At1g07590, mitochondrial (534 aa).

The transit peptide at 1-20 (MRSIIALMRQREYFVQAIRR) directs the protein to the mitochondrion. PPR repeat units lie at residues 165–199 (NELLYNNLVIACLDQGVIRLALEYMKKMRELGYRT), 200–234 (SHLVYNRLIIRNSAPGRRKLIAKDLALMKADKATP), 235–269 (HVSTYHILMKLEANEHNIDGVLKAFDGMKKAGVEP), 270–300 (NEVSYCILAMAHAVARLYTVAEAYTEEIEKS), 305–335 (NWSTLDILMILYGRLGKEKELARTWNVIRGF), 339–369 (RSKSYLLATEAFARVGNLDRAEELWLEMKNV), 374–408 (ETEQFNSLLSVYCKDGLIEKAIGVFREMTGNGFKP), 409–443 (NSITYRHLALGCAKAKLMKEALKNIEMGLNLKTSK), and 451–485 (WLETTLSIIECFAEKGDVENSEKLFEEVKNAKYNR).

It belongs to the PPR family. P subfamily.

It localises to the mitochondrion. This is Pentatricopeptide repeat-containing protein At1g07590, mitochondrial from Arabidopsis thaliana (Mouse-ear cress).